Consider the following 155-residue polypeptide: Small ribosomal subunit protein uS7c (155 aa).

Belongs to the universal ribosomal protein uS7 family. As to quaternary structure, part of the 30S ribosomal subunit.

The protein resides in the plastid. The protein localises to the chloroplast. Its function is as follows. One of the primary rRNA binding proteins, it binds directly to 16S rRNA where it nucleates assembly of the head domain of the 30S subunit. This Aristolochia macrophylla (Dutchman's pipe vine) protein is Small ribosomal subunit protein uS7c (rps7).